Consider the following 129-residue polypeptide: Ribosome-binding factor A (129 aa).

This sequence belongs to the RbfA family. Monomer. Binds 30S ribosomal subunits, but not 50S ribosomal subunits or 70S ribosomes.

The protein resides in the cytoplasm. One of several proteins that assist in the late maturation steps of the functional core of the 30S ribosomal subunit. Associates with free 30S ribosomal subunits (but not with 30S subunits that are part of 70S ribosomes or polysomes). Required for efficient processing of 16S rRNA. May interact with the 5'-terminal helix region of 16S rRNA. This is Ribosome-binding factor A from Azotobacter vinelandii (strain DJ / ATCC BAA-1303).